We begin with the raw amino-acid sequence, 197 residues long: MKKVIIVDASVTPSGSYTHLLLDRFLQTYKKQNSSVEFIDWNLNELPVGKISYNTQNASNFFSFENSDYYIDALKTAYGIVILAPMTNFNYPASLKNFIDHVFVANKTFQDKYVTKGASKGLLTNLKVVVLASQGAPLGWYPWADHVSNLKGLFGFAGVTHFESVLIDDTKILYKDKNKQEVVDLFAHKVDQVANNF.

FMN is bound at residue Ser10.

It belongs to the azoreductase type 1 family. Homodimer. FMN is required as a cofactor.

It catalyses the reaction 2 a quinone + NADH + H(+) = 2 a 1,4-benzosemiquinone + NAD(+). It carries out the reaction N,N-dimethyl-1,4-phenylenediamine + anthranilate + 2 NAD(+) = 2-(4-dimethylaminophenyl)diazenylbenzoate + 2 NADH + 2 H(+). Functionally, quinone reductase that provides resistance to thiol-specific stress caused by electrophilic quinones. Also exhibits azoreductase activity. Catalyzes the reductive cleavage of the azo bond in aromatic azo compounds to the corresponding amines. The sequence is that of FMN-dependent NADH:quinone oxidoreductase from Mycoplasma genitalium (strain ATCC 33530 / DSM 19775 / NCTC 10195 / G37) (Mycoplasmoides genitalium).